A 311-amino-acid polypeptide reads, in one-letter code: Probable 5-dehydro-4-deoxyglucarate dehydratase (311 aa).

The protein belongs to the DapA family.

The enzyme catalyses 5-dehydro-4-deoxy-D-glucarate + H(+) = 2,5-dioxopentanoate + CO2 + H2O. It participates in carbohydrate acid metabolism; D-glucarate degradation; 2,5-dioxopentanoate from D-glucarate: step 2/2. This is Probable 5-dehydro-4-deoxyglucarate dehydratase from Ralstonia nicotianae (strain ATCC BAA-1114 / GMI1000) (Ralstonia solanacearum).